The sequence spans 250 residues: Protein orai-2 (250 aa).

A run of 4 helical transmembrane segments spans residues 66–83 (TSAL…EVQL), 94–114 (LIAF…ALLI), 148–168 (LAWG…VVLL), and 192–212 (AALV…VFTI).

This sequence belongs to the Orai family. As to quaternary structure, oligomerizes in homomeric and heteromeric ORAI complexes. Native CRAC channels most likely consist of hexameric ORAI heteromers, implying that diverse ORAI1, ORAI2 and ORAI3 subunit combinations with distinct biophysical properties can operate in a cell-type specific way. Interacts with STIM1; this regulates channel activity. Interacts with CRACR2A/EFCAB4B.

The protein localises to the cell membrane. The enzyme catalyses Ca(2+)(in) = Ca(2+)(out). CRAC channels are regulated by fast Ca(2+)-dependent inactivation (FCDI), a mechanism that limits Ca(2+) influx and cell toxicity. ORAI2 channels display prominent FCDI. Inhibited by lanthanides such as Gd(3+) ions. Functionally, pore-forming subunit of inward rectifying Ca(2+) release-activated Ca(2+) (CRAC) channels. Assembles with ORAI1 and ORAI3 to form hexameric CRAC channels that mediate Ca(2+) influx upon depletion of endoplasmic reticulum Ca(2+) store and channel activation by Ca(2+) sensor STIM1, a process known as store-operated Ca(2+) entry (SOCE). Various pore subunit combinations may account for distinct CRAC channel spatiotemporal and cell-type specific dynamics. ORAI1 mainly contributes to the generation of Ca(2+) plateaus involved in sustained Ca(2+) entry and is dispensable for cytosolic Ca(2+) oscillations, whereas ORAI2 and ORAI3 generate oscillatory patterns. CRAC channels assemble in Ca(2+) signaling microdomains where Ca(2+) influx is coupled to calmodulin and calcineurin signaling and activation of NFAT transcription factors recruited to ORAI1 via AKAP5. CRAC channels are the main pathway for Ca(2+) influx in T cells and promote the immune response to pathogens by activating NFAT-dependent cytokine and chemokine transcription. The polypeptide is Protein orai-2 (Orai2) (Mus musculus (Mouse)).